Consider the following 158-residue polypeptide: NADH-quinone oxidoreductase subunit B (158 aa).

4 residues coordinate [4Fe-4S] cluster: Cys-37, Cys-38, Cys-102, and Cys-132.

This sequence belongs to the complex I 20 kDa subunit family. In terms of assembly, NDH-1 is composed of 14 different subunits. Subunits NuoB, C, D, E, F, and G constitute the peripheral sector of the complex. [4Fe-4S] cluster is required as a cofactor.

The protein resides in the cell inner membrane. The enzyme catalyses a quinone + NADH + 5 H(+)(in) = a quinol + NAD(+) + 4 H(+)(out). Its function is as follows. NDH-1 shuttles electrons from NADH, via FMN and iron-sulfur (Fe-S) centers, to quinones in the respiratory chain. Couples the redox reaction to proton translocation (for every two electrons transferred, four hydrogen ions are translocated across the cytoplasmic membrane), and thus conserves the redox energy in a proton gradient. This Bordetella avium (strain 197N) protein is NADH-quinone oxidoreductase subunit B.